The chain runs to 230 residues: Small ribosomal subunit protein uS3 (230 aa).

Residues 39–107 enclose the KH type-2 domain; the sequence is VREYLFKRLK…PVHINIEEVR (69 aa).

This sequence belongs to the universal ribosomal protein uS3 family. As to quaternary structure, part of the 30S ribosomal subunit. Forms a tight complex with proteins S10 and S14.

Binds the lower part of the 30S subunit head. Binds mRNA in the 70S ribosome, positioning it for translation. The sequence is that of Small ribosomal subunit protein uS3 from Alcanivorax borkumensis (strain ATCC 700651 / DSM 11573 / NCIMB 13689 / SK2).